The sequence spans 505 residues: T-cell activation GTPase-activating protein 1 (505 aa).

Disordered stretches follow at residues 81-147 (DDSL…SESS), 160-212 (QQDR…DPFT), 242-293 (QGHI…QREI), 311-339 (RTSS…SQLS), and 414-441 (KPST…HRLS). Residues 90-102 (SDVSTLQNDSAYD) are compositionally biased toward polar residues. The segment covering 203–212 (EGDEAEDPFT) has biased composition (acidic residues). The span at 250–262 (SRSSPGESLGSSP) shows a compositional bias: low complexity. 2 stretches are compositionally biased toward basic and acidic residues: residues 283 to 292 (KTDKTKPQRE) and 318 to 336 (EKSK…RKES).

The polypeptide is T-cell activation GTPase-activating protein 1 (Tagap1) (Mus musculus (Mouse)).